The sequence spans 398 residues: MEEDDSYVPSDLTAEERQELENIRRRKQELLADIQRLKDEIAEVANEIENLGSTEERKNMQRNKQVAMGRKKFNMDPKKGIQFLIENDLLKNTCEDIAQFLYKGEGLNKTAIGDYLGERDEFNIQVLHAFVELHEFTDLNLVQALRQFLWSFRLPGEAQKIDRMMEAFAQRYCQCNNGVFQSTDTCYVLSFAIIMLNTSLHNPNVKDKPTVERFIAMNRGINDGGDLPEELLRNLYESIKNEPFKIPEDDGNDLTHTFFNPDREGWLLKLGGGRVKTWKRRWFILTDNCLYYFEYTTDKEPRGIIPLENLSIREVEDSKKPNCFELYIPDNKDQVIKACKTEADGRVVEGNHTVYRISAPTPEEKEEWIKCIKAAISRDPFYEMLAARKKKVSSTKRH.

Residue Met1 is modified to N-acetylmethionine. The stretch at 10–67 (SDLTAEERQELENIRRRKQELLADIQRLKDEIAEVANEIENLGSTEERKNMQRNKQVA) forms a coiled coil. In terms of domain architecture, SEC7 spans 73–202 (FNMDPKKGIQ…IIMLNTSLHN (130 aa)). A PH domain is found at 260–377 (NPDREGWLLK…WIKCIKAAIS (118 aa)). Residues 269-277 (KLGGGRVKT), Arg281, Tyr292, Arg302, and Asn351 contribute to the a 1,2-diacyl-sn-glycero-3-phospho-(1D-myo-inositol-3,4,5-trisphosphate) site. A C-terminal autoinhibitory region region spans residues 388–396 (RKKKVSSTK).

As to quaternary structure, interacts with TRIM23 and CYTIP. Interacts (via coiled-coil domain) with FRMD4A (via coiled-coil domain). Interacts with FRMD4B. Found in a complex with PARD3, CYTH1 and FRMD4A. Interacts (via N-terminal domain) with INAVA (via N-terminal domain). Ubiquitinated by SCF(FBXW11) E3 ubiquitin-protein ligase complex. Ubiquitination induces proteasomal degradation.

It is found in the cell membrane. The protein localises to the cytoplasm. It localises to the cytosol. Its subcellular location is the cell junction. The protein resides in the tight junction. It is found in the adherens junction. Its function is as follows. Promotes guanine-nucleotide exchange on ARF1, ARF5 and ARF6. Promotes the activation of ARF factors through replacement of GDP with GTP. Plays an important role in membrane trafficking, during junctional remodeling and epithelial polarization, through regulation of ARF6 activity. This is Cytohesin-1 (CYTH1) from Chlorocebus aethiops (Green monkey).